An 890-amino-acid chain; its full sequence is Genome polyprotein 2 (890 aa).

In terms of domain architecture, Peptidase C6 spans 135–255 (AFNFAHGYCY…NSDLLNGIVG (121 aa)). Active-site for helper component proteinase activity residues include Cys-143 and His-215. Residues 506–533 (FTTSGDDDSPPPPGDSPSRPPGRSPDRV) form a disordered region. Pro residues predominate over residues 515–528 (PPPPGDSPSRPPGR). The stretch at 788–816 (ELVQRSMTKLDKEIELFQAQIDSQRRAVT) forms a coiled coil.

This sequence belongs to the bymoviruses polyprotein 2 family. In terms of processing, the viral RNA2 of bymoviruses is expressed as a single polyprotein which undergoes post-translational proteolytic processing resulting in the production of at least two individual proteins. The HC-pro cleaves its C-terminus autocatalytically (Potential).

It carries out the reaction Hydrolyzes a Gly-|-Gly bond at its own C-terminus, commonly in the sequence -Tyr-Xaa-Val-Gly-|-Gly, in the processing of the potyviral polyprotein.. This Hordeum vulgare (Barley) protein is Genome polyprotein 2.